The primary structure comprises 714 residues: Probable serine/threonine-protein kinase mkcB (714 aa).

The segment covering 1–12 has biased composition (basic residues); that stretch reads MKSILKKAKHFF. Disordered stretches follow at residues 1–267 and 281–349; these read MKSI…SSTS and GSGS…EQKP. Basic and acidic residues predominate over residues 23–35; sequence GGEKTAKESESQQ. Positions 62 to 83 are enriched in low complexity; it reads SQSQPTTSALQTSTSLQPSSSL. Over residues 84-94 the composition is skewed to polar residues; the sequence is HQIPQSQSSLE. 2 stretches are compositionally biased toward low complexity: residues 95–111 and 120–166; these read LTTN…TKQL and PHSQ…TLTT. Positions 167–177 are enriched in polar residues; it reads PVPSSENLATL. 2 stretches are compositionally biased toward low complexity: residues 178-241 and 254-267; these read STST…QEQT and LSQS…SSTS. The span at 282–294 shows a compositional bias: polar residues; sequence SGSTKNKDSSSAP. 2 stretches are compositionally biased toward low complexity: residues 300-314 and 324-337; these read NNNN…KNRS and NNNN…KNNN. One can recognise a Protein kinase domain in the interval 438 to 687; that stretch reads YKDSDQVGKG…AEELLKHPFI (250 aa). Residues 444–452 and Lys-467 each bind ATP; that span reads VGKGGFGTV. Asp-558 functions as the Proton acceptor in the catalytic mechanism.

It belongs to the protein kinase superfamily. STE Ser/Thr protein kinase family. STE20 subfamily. Mg(2+) is required as a cofactor. Expressed at equal levels in prestalk and prespore cells.

The catalysed reaction is L-seryl-[protein] + ATP = O-phospho-L-seryl-[protein] + ADP + H(+). It catalyses the reaction L-threonyl-[protein] + ATP = O-phospho-L-threonyl-[protein] + ADP + H(+). In Dictyostelium discoideum (Social amoeba), this protein is Probable serine/threonine-protein kinase mkcB.